Consider the following 480-residue polypeptide: Methylenetetrahydrofolate--tRNA-(uracil-5-)-methyltransferase TrmFO (480 aa).

15–20 lines the FAD pocket; the sequence is GGGLAG.

Belongs to the MnmG family. TrmFO subfamily. Requires FAD as cofactor.

The protein resides in the cytoplasm. It catalyses the reaction uridine(54) in tRNA + (6R)-5,10-methylene-5,6,7,8-tetrahydrofolate + NADH + H(+) = 5-methyluridine(54) in tRNA + (6S)-5,6,7,8-tetrahydrofolate + NAD(+). It carries out the reaction uridine(54) in tRNA + (6R)-5,10-methylene-5,6,7,8-tetrahydrofolate + NADPH + H(+) = 5-methyluridine(54) in tRNA + (6S)-5,6,7,8-tetrahydrofolate + NADP(+). Functionally, catalyzes the folate-dependent formation of 5-methyl-uridine at position 54 (M-5-U54) in all tRNAs. The chain is Methylenetetrahydrofolate--tRNA-(uracil-5-)-methyltransferase TrmFO from Caulobacter sp. (strain K31).